Consider the following 427-residue polypeptide: Glutamate-1-semialdehyde 2,1-aminomutase (427 aa).

The residue at position 267 (lysine 267) is an N6-(pyridoxal phosphate)lysine.

Belongs to the class-III pyridoxal-phosphate-dependent aminotransferase family. HemL subfamily. Homodimer. It depends on pyridoxal 5'-phosphate as a cofactor.

The protein resides in the cytoplasm. It carries out the reaction (S)-4-amino-5-oxopentanoate = 5-aminolevulinate. It functions in the pathway porphyrin-containing compound metabolism; protoporphyrin-IX biosynthesis; 5-aminolevulinate from L-glutamyl-tRNA(Glu): step 2/2. In Acetivibrio thermocellus (strain ATCC 27405 / DSM 1237 / JCM 9322 / NBRC 103400 / NCIMB 10682 / NRRL B-4536 / VPI 7372) (Clostridium thermocellum), this protein is Glutamate-1-semialdehyde 2,1-aminomutase.